The following is a 119-amino-acid chain: Ribonuclease P protein component (119 aa).

It belongs to the RnpA family. As to quaternary structure, consists of a catalytic RNA component (M1 or rnpB) and a protein subunit.

It carries out the reaction Endonucleolytic cleavage of RNA, removing 5'-extranucleotides from tRNA precursor.. RNaseP catalyzes the removal of the 5'-leader sequence from pre-tRNA to produce the mature 5'-terminus. It can also cleave other RNA substrates such as 4.5S RNA. The protein component plays an auxiliary but essential role in vivo by binding to the 5'-leader sequence and broadening the substrate specificity of the ribozyme. The sequence is that of Ribonuclease P protein component from Clostridium acetobutylicum (strain ATCC 824 / DSM 792 / JCM 1419 / IAM 19013 / LMG 5710 / NBRC 13948 / NRRL B-527 / VKM B-1787 / 2291 / W).